We begin with the raw amino-acid sequence, 426 residues long: Glutamate-1-semialdehyde 2,1-aminomutase (426 aa).

N6-(pyridoxal phosphate)lysine is present on Lys265.

This sequence belongs to the class-III pyridoxal-phosphate-dependent aminotransferase family. HemL subfamily. As to quaternary structure, homodimer. Requires pyridoxal 5'-phosphate as cofactor.

It is found in the cytoplasm. The catalysed reaction is (S)-4-amino-5-oxopentanoate = 5-aminolevulinate. It functions in the pathway porphyrin-containing compound metabolism; protoporphyrin-IX biosynthesis; 5-aminolevulinate from L-glutamyl-tRNA(Glu): step 2/2. In Enterobacter sp. (strain 638), this protein is Glutamate-1-semialdehyde 2,1-aminomutase.